A 234-amino-acid polypeptide reads, in one-letter code: Proteasome subunit alpha (234 aa).

Belongs to the peptidase T1A family. In terms of assembly, the 20S proteasome core is composed of 14 alpha and 14 beta subunits that assemble into four stacked heptameric rings, resulting in a barrel-shaped structure. The two inner rings, each composed of seven catalytic beta subunits, are sandwiched by two outer rings, each composed of seven alpha subunits. The catalytic chamber with the active sites is on the inside of the barrel. Has a gated structure, the ends of the cylinder being occluded by the N-termini of the alpha-subunits. Is capped by the proteasome-associated ATPase, ARC.

It is found in the cytoplasm. Its pathway is protein degradation; proteasomal Pup-dependent pathway. The formation of the proteasomal ATPase ARC-20S proteasome complex, likely via the docking of the C-termini of ARC into the intersubunit pockets in the alpha-rings, may trigger opening of the gate for substrate entry. Interconversion between the open-gate and close-gate conformations leads to a dynamic regulation of the 20S proteasome proteolysis activity. In terms of biological role, component of the proteasome core, a large protease complex with broad specificity involved in protein degradation. This is Proteasome subunit alpha from Acidothermus cellulolyticus (strain ATCC 43068 / DSM 8971 / 11B).